A 334-amino-acid polypeptide reads, in one-letter code: N-acetyl-gamma-glutamyl-phosphate reductase (334 aa).

The active site involves Cys142.

This sequence belongs to the NAGSA dehydrogenase family. Type 1 subfamily.

Its subcellular location is the cytoplasm. It catalyses the reaction N-acetyl-L-glutamate 5-semialdehyde + phosphate + NADP(+) = N-acetyl-L-glutamyl 5-phosphate + NADPH + H(+). Its pathway is amino-acid biosynthesis; L-arginine biosynthesis; N(2)-acetyl-L-ornithine from L-glutamate: step 3/4. Its function is as follows. Catalyzes the NADPH-dependent reduction of N-acetyl-5-glutamyl phosphate to yield N-acetyl-L-glutamate 5-semialdehyde. The sequence is that of N-acetyl-gamma-glutamyl-phosphate reductase from Pelodictyon phaeoclathratiforme (strain DSM 5477 / BU-1).